Here is a 92-residue protein sequence, read N- to C-terminus: Co-chaperonin GroES (92 aa).

Belongs to the GroES chaperonin family. In terms of assembly, heptamer of 7 subunits arranged in a ring. Interacts with the chaperonin GroEL.

It is found in the cytoplasm. Together with the chaperonin GroEL, plays an essential role in assisting protein folding. The GroEL-GroES system forms a nano-cage that allows encapsulation of the non-native substrate proteins and provides a physical environment optimized to promote and accelerate protein folding. GroES binds to the apical surface of the GroEL ring, thereby capping the opening of the GroEL channel. This Thermotoga neapolitana protein is Co-chaperonin GroES.